The sequence spans 374 residues: Dispase autolysis-inducing protein (374 aa).

The first 26 residues, 1 to 26, serve as a signal peptide directing secretion; that stretch reads MKRMGWAVTAAVTTIVLAQSSLAAQA.

It is found in the secreted. Induces autolysis of dispase and thermolysin. The chain is Dispase autolysis-inducing protein (daip) from Streptomyces mobaraensis (Streptoverticillium mobaraense).